The following is a 477-amino-acid chain: Ribulose bisphosphate carboxylase large chain (477 aa).

Residues methionine 1 to serine 2 constitute a propeptide that is removed on maturation. Residue proline 3 is modified to N-acetylproline. At lysine 14 the chain carries N6,N6,N6-trimethyllysine. Asparagine 123 and threonine 173 together coordinate substrate. The Proton acceptor role is filled by lysine 175. Lysine 177 is a substrate binding site. Residues lysine 201, aspartate 203, and glutamate 204 each contribute to the Mg(2+) site. N6-carboxylysine is present on lysine 201. The active-site Proton acceptor is the histidine 294. 3 residues coordinate substrate: arginine 295, histidine 327, and serine 379.

This sequence belongs to the RuBisCO large chain family. Type I subfamily. Heterohexadecamer of 8 large chains and 8 small chains; disulfide-linked. The disulfide link is formed within the large subunit homodimers. Requires Mg(2+) as cofactor. In terms of processing, the disulfide bond which can form in the large chain dimeric partners within the hexadecamer appears to be associated with oxidative stress and protein turnover.

Its subcellular location is the plastid. It localises to the chloroplast. It carries out the reaction 2 (2R)-3-phosphoglycerate + 2 H(+) = D-ribulose 1,5-bisphosphate + CO2 + H2O. It catalyses the reaction D-ribulose 1,5-bisphosphate + O2 = 2-phosphoglycolate + (2R)-3-phosphoglycerate + 2 H(+). In terms of biological role, ruBisCO catalyzes two reactions: the carboxylation of D-ribulose 1,5-bisphosphate, the primary event in carbon dioxide fixation, as well as the oxidative fragmentation of the pentose substrate in the photorespiration process. Both reactions occur simultaneously and in competition at the same active site. This is Ribulose bisphosphate carboxylase large chain from Nicotiana sylvestris (Wood tobacco).